Reading from the N-terminus, the 2346-residue chain is Nucleoprotein TPR (2346 aa).

Coiled coils occupy residues Asp38 to Ile190, Gln217 to Ser366, Tyr395 to Val493, and Lys565 to Val596. The interval Val622 to Ser649 is disordered. A compositionally biased stretch (polar residues) spans Leu629–Pro642. Coiled coils occupy residues Ala643–Leu1158 and Glu1196–Asn1247. The tract at residues Leu1187–Met1655 is interacts with Mad1. Thr1259, Thr1302, Thr1338, and Thr1390 each carry phosphothreonine. 2 coiled-coil regions span residues Thr1281 to Glu1536 and Ser1579 to Gln1627. 2 stretches are compositionally biased toward polar residues: residues Arg1621 to Thr1649 and Gly1657 to Val1667. Disordered stretches follow at residues Arg1621–Leu1677, Pro1695–Ser1768, and Ser1821–Pro2346. The span at Ala1702–Ala1722 shows a compositional bias: low complexity. Positions Pro1738 to Ser1747 are enriched in polar residues. Composition is skewed to low complexity over residues Ser1752–Ser1761 and Ser1827–Ser1878. The segment covering Asn1879 to Gly1891 has biased composition (polar residues). A compositionally biased stretch (acidic residues) spans Gln1953–Val2023. Residues Met2028–Lys2080 are compositionally biased toward polar residues. The segment covering Ala2082 to Ala2091 has biased composition (low complexity). Composition is skewed to polar residues over residues Ser2097 to Cys2110 and Gly2142 to Ser2159. A compositionally biased stretch (basic and acidic residues) spans Lys2165–Asp2184. Polar residues-rich tracts occupy residues Ala2193–Asn2223 and Arg2302–Ala2322. Over residues Gln2323–Arg2332 the composition is skewed to basic residues.

The protein belongs to the TPR family. In terms of assembly, part of the nuclear pore complex (NPC). Associates with male-specific lethal (MSL) histone acetyltransferase complex. Interacts with Mad2; the interaction is required for efficient recruitment of Mad2 to unattached kinetochore and occurs in a microtubule-independent manner. Interacts with Mad1 (N-terminus). Interacts with Chro, east and Asator; the interaction is part of a macromolecular complex forming the spindle matrix during mitosis. Interacts with Nup98. In males, interacts with histone acetyltransferase mof. Post-translationally, mps1-mediated phosphorylation disrupts interaction with Mad1 during mitosis. As to expression, expressed in salivary glands, fat body, tracheal tube, esophageal tube and anterior ejaculatory duct (at protein level).

The protein localises to the nucleus. Its subcellular location is the nucleus matrix. The protein resides in the nucleus lamina. It is found in the nucleus envelope. It localises to the nucleus membrane. The protein localises to the nuclear pore complex. Its subcellular location is the cytoplasm. The protein resides in the cytoskeleton. It is found in the spindle. It localises to the chromosome. The protein localises to the centromere. Its subcellular location is the kinetochore. The protein resides in the midbody. Functionally, component of the nuclear pore complex (NPC), a complex required for the trafficking across the nuclear envelope. Functions as a scaffolding element in the nuclear phase of the NPC. Plays a role in chromosomal organization and gene expression regulation; stimulates transcription by promoting the formation of an open chromatin environment. Binds chromatin to nucleoporin-associated regions (NARs) that define transcriptionally active regions of the genome. Associates with extended chromosomal regions that alternate between domains of high density binding with those of low occupancy. Preferentially binds to NARs of the male X chromosome. In males, together with Nup153, required for the localization of the male-specific lethal (MSL) histone acetyltransferase complex to the X chromosome and therefore for the transcription of dosage compensation genes. In males, restrains dosage-compensated expression at the level of nascent transcription probably by interacting with the MSL complex and by modulating RNA Polymerase II phosphorylation status and activity. During mitosis forms a gel-like spindle matrix complex together with Skeletor (Skel), Chro, east, and Asator embedding the microtubule spindle apparatus. During interphase localizes Mad1 to the nuclear pore complex and thereby might act as a scaffold to assemble the Mad1-C-Mad2 complex, a heterotetramer that catalyzes the structural conversion of open-Mad2 (O-Mad2) into closed-Mad2 (C-Mad2) which is essential for spindle-assembly checkpoint (SAC). During the metaphase-anaphase transition and before chromosome congression, is phosphorylated by Msp-1; this modification releases Mad1 from the nuclear pore complex and thereby promotes assembly of SAC ensuring a timely and effective recruitment of spindle checkpoint proteins like Mad1, Mad2 and Mps1 to unattached kinetochores (KT). In testes, has a role in stem cell asymmetric division and maintenance via regulation of mitotic spindle assembly checkpoint (SAC) complex. The protein is Nucleoprotein TPR of Drosophila melanogaster (Fruit fly).